Consider the following 923-residue polypeptide: Helicase POLQ-like (923 aa).

The tract at residues 1–84 (MNRTPIRRCK…STVTPIQQKI (84 aa)) is disordered. The span at 43 to 55 (STSPQSPSSSTEN) shows a compositional bias: low complexity. The Helicase ATP-binding domain maps to 178–349 (DKRLLDGENC…ALRAFVYSTN (172 aa)). Residue 191-198 (LPTGAGKT) coordinates ATP. The DEAH box signature appears at 295-298 (DELH). The region spanning 392–596 (GICQLLAKLI…CVVLKLAENI (205 aa)) is the Helicase C-terminal domain.

This sequence belongs to the helicase family. SKI2 subfamily.

Its subcellular location is the nucleus. The protein localises to the chromosome. The catalysed reaction is Couples ATP hydrolysis with the unwinding of duplex DNA by translocating in the 3'-5' direction.. It catalyses the reaction ATP + H2O = ADP + phosphate + H(+). Functionally, single-stranded 3'-5' DNA helicase that plays a key role in homology-driven double-strand break (DSB) repair. Involved in different DSB repair mechanisms that are guided by annealing of extensive stretches of complementary bases at break ends, such as microhomology-mediated end-joining (MMEJ), single-strand annealing (SSA) or synthesis-dependent strand annealing (SDSA). The chain is Helicase POLQ-like from Caenorhabditis elegans.